A 324-amino-acid chain; its full sequence is G patch domain-containing protein 4 (324 aa).

2 disordered regions span residues 1–30 (MSASSVKKSQGMKFAEEQMHKHGWKEGKGL) and 123–324 (LSGG…NKSE). The G-patch domain occupies 11–57 (GMKFAEEQMHKHGWKEGKGLGRRENGICEAIKVKVKCDHAGVGHNSA). Positions 14-30 (FAEEQMHKHGWKEGKGL) are enriched in basic and acidic residues. Residues 131 to 141 (KEPSSSESSDS) show a composition bias toward low complexity. Positions 186–215 (SRLEEQEREFLAKYGKKEQKNKERDEKLER) are enriched in basic and acidic residues. The span at 244 to 253 (HKKKKKKRKR) shows a compositional bias: basic residues. Basic and acidic residues predominate over residues 254 to 270 (ADSERKEESQENGHEEE). Residues 296–309 (PSTQEEQPTESSDF) are compositionally biased toward polar residues. Residues 312–324 (KPKKKKKKKNKSE) show a composition bias toward basic residues.

In Xenopus laevis (African clawed frog), this protein is G patch domain-containing protein 4 (gpatch4).